The following is a 116-amino-acid chain: Iron-sulfur cluster insertion protein ErpA (116 aa).

Iron-sulfur cluster contacts are provided by Cys-44, Cys-108, and Cys-110.

This sequence belongs to the HesB/IscA family. As to quaternary structure, homodimer. Requires iron-sulfur cluster as cofactor.

Functionally, required for insertion of 4Fe-4S clusters for at least IspG. The sequence is that of Iron-sulfur cluster insertion protein ErpA from Aeromonas hydrophila subsp. hydrophila (strain ATCC 7966 / DSM 30187 / BCRC 13018 / CCUG 14551 / JCM 1027 / KCTC 2358 / NCIMB 9240 / NCTC 8049).